Here is a 293-residue protein sequence, read N- to C-terminus: Energy-coupling factor transporter ATP-binding protein EcfA2 (293 aa).

The ABC transporter domain occupies 3 to 246; the sequence is ITFQKVEHRY…ADELEKIGVD (244 aa). 40–47 is a binding site for ATP; sequence GHTGSGKS.

Belongs to the ABC transporter superfamily. Energy-coupling factor EcfA family. As to quaternary structure, forms a stable energy-coupling factor (ECF) transporter complex composed of 2 membrane-embedded substrate-binding proteins (S component), 2 ATP-binding proteins (A component) and 2 transmembrane proteins (T component).

The protein resides in the cell membrane. Functionally, ATP-binding (A) component of a common energy-coupling factor (ECF) ABC-transporter complex. Unlike classic ABC transporters this ECF transporter provides the energy necessary to transport a number of different substrates. The sequence is that of Energy-coupling factor transporter ATP-binding protein EcfA2 from Bacillus cereus (strain ATCC 14579 / DSM 31 / CCUG 7414 / JCM 2152 / NBRC 15305 / NCIMB 9373 / NCTC 2599 / NRRL B-3711).